The primary structure comprises 401 residues: Acetate kinase (401 aa).

Residue asparagine 10 participates in Mg(2+) binding. Lysine 17 contacts ATP. Arginine 91 is a substrate binding site. Aspartate 150 functions as the Proton donor/acceptor in the catalytic mechanism. ATP contacts are provided by residues 210 to 214 (HLGNG), 285 to 287 (DCR), and 333 to 337 (GIGEN). Glutamate 387 is a binding site for Mg(2+).

It belongs to the acetokinase family. As to quaternary structure, homodimer. Mg(2+) serves as cofactor. Mn(2+) is required as a cofactor.

The protein resides in the cytoplasm. The catalysed reaction is acetate + ATP = acetyl phosphate + ADP. The protein operates within metabolic intermediate biosynthesis; acetyl-CoA biosynthesis; acetyl-CoA from acetate: step 1/2. In terms of biological role, catalyzes the formation of acetyl phosphate from acetate and ATP. Can also catalyze the reverse reaction. This is Acetate kinase from Pasteurella multocida (strain Pm70).